The following is a 224-amino-acid chain: Flagellar L-ring protein (224 aa).

Residues 1–15 form the signal peptide; that stretch reads MARYLVLAVALLLAA. The N-palmitoyl cysteine moiety is linked to residue Cys16. Cys16 carries the S-diacylglycerol cysteine lipid modification.

Belongs to the FlgH family. In terms of assembly, the basal body constitutes a major portion of the flagellar organelle and consists of four rings (L,P,S, and M) mounted on a central rod.

The protein localises to the cell outer membrane. The protein resides in the bacterial flagellum basal body. Its function is as follows. Assembles around the rod to form the L-ring and probably protects the motor/basal body from shearing forces during rotation. This is Flagellar L-ring protein from Shewanella baltica (strain OS223).